A 483-amino-acid chain; its full sequence is BTB/POZ domain and ankyrin repeat-containing protein NBCL (483 aa).

In terms of domain architecture, BTB spans 25–109 (SDVTFSVEGR…LYSGQVSIVP (85 aa)). The C2HC NPR-type zinc finger occupies 115-129 (RPNCGERACWHTHCT). Residues Cys-118, Cys-123, His-125, and Cys-128 each contribute to the Zn(2+) site. ANK repeat units lie at residues 254–283 (QKIRRMRRALDSSDVELVKLMVMGEGLNLD), 284–313 (EALALPYAVENCSREVVKALLELGAADVNY), 318–347 (SGKTPLHIAAEMVSPDMVAVLLDHHADPNV), and 351–385 (DGVTPLDILRTLTSDFLFKGAVPGLTHIEPNKLRL). Positions 401–437 (EGNANANSSNNNNAPCSAATPIYPPMNEDHNSSSSNA) are disordered. Low complexity predominate over residues 403–419 (NANANSSNNNNAPCSAA).

This sequence belongs to the plant 'ANKYRIN-BTB/POZ' family. 'NOOT-BOP-COCH-like' (NBCL) subfamily. As to quaternary structure, homodimer. Interacts with APP1 around the plasma membrane and in the nucleus; this interaction disturbs APP1-mediated regulation of the nuclear transcription factor Y subunit (NF-YA1). In terms of tissue distribution, mainly expressed in root nodules, to a lesser extent in shoot apical meristems (SAM) and root meristems (RM), and barely in leaves, non-nodulating roots and root apical meristems (RAM).

Its subcellular location is the nucleus. The protein resides in the cytoplasm. The protein localises to the cell membrane. It functions in the pathway protein modification; protein ubiquitination. In terms of biological role, may act as a substrate-specific adapter of an E3 ubiquitin-protein ligase complex (CUL3-RBX1-BTB) which mediates the ubiquitination and subsequent proteasomal degradation of target proteins. Transcriptional co-regulator involved in the promotion of leaf and floral meristem fate and determinacy. Required for the abscission of senescent organs, probably by regulating the cell wall disorganization in abscission zones (AZs, e.g. pulvini at the base of leaves). Involved in the coordination of the symbiotic nodule developmental program; promotes the formation of root nodules by interacting directly with APP1 to modulate the expression of the nuclear transcription factor Y subunit (NF-YA1), a key nodulin. Necessary for the robust maintenance of nodule identity throughout the nodule developmental program. The polypeptide is BTB/POZ domain and ankyrin repeat-containing protein NBCL (Lotus japonicus (Lotus corniculatus var. japonicus)).